A 70-amino-acid polypeptide reads, in one-letter code: MARVTVEDCLENVDNRFQLVMLATKRARQIATKGAEPMVAEENDKPTVIALREIAEGKVTRDLLLEEDDD.

This sequence belongs to the RNA polymerase subunit omega family. As to quaternary structure, the RNAP catalytic core consists of 2 alpha, 1 beta, 1 beta' and 1 omega subunit. When a sigma factor is associated with the core the holoenzyme is formed, which can initiate transcription.

The catalysed reaction is RNA(n) + a ribonucleoside 5'-triphosphate = RNA(n+1) + diphosphate. In terms of biological role, promotes RNA polymerase assembly. Latches the N- and C-terminal regions of the beta' subunit thereby facilitating its interaction with the beta and alpha subunits. This is DNA-directed RNA polymerase subunit omega from Marinobacter nauticus (strain ATCC 700491 / DSM 11845 / VT8) (Marinobacter aquaeolei).